The primary structure comprises 274 residues: Bis(5'-nucleosyl)-tetraphosphatase, symmetrical (274 aa).

This sequence belongs to the Ap4A hydrolase family.

The catalysed reaction is P(1),P(4)-bis(5'-adenosyl) tetraphosphate + H2O = 2 ADP + 2 H(+). Hydrolyzes diadenosine 5',5'''-P1,P4-tetraphosphate to yield ADP. The sequence is that of Bis(5'-nucleosyl)-tetraphosphatase, symmetrical from Shewanella sp. (strain MR-7).